We begin with the raw amino-acid sequence, 353 residues long: Transcription termination/antitermination protein NusG (353 aa).

The region spanning V301–I335 is the KOW domain.

It belongs to the NusG family.

Regulated by autoinhibition via interaction of the N-terminal and the C-terminal domains. Autoinhibition may prevent NusG from interacting prematurely with other components of the transcription complex or non-specific interactions with other cellular components. Participates in transcription elongation, termination and antitermination. This Thermotoga maritima (strain ATCC 43589 / DSM 3109 / JCM 10099 / NBRC 100826 / MSB8) protein is Transcription termination/antitermination protein NusG.